We begin with the raw amino-acid sequence, 471 residues long: Glutamate--tRNA ligase 1 (471 aa).

The 'HIGH' region signature appears at 15 to 25 (PSPTGYLHIGG). Positions 243–247 (KLSKR) match the 'KMSKS' region motif. K246 contacts ATP.

The protein belongs to the class-I aminoacyl-tRNA synthetase family. Glutamate--tRNA ligase type 1 subfamily. Monomer.

The protein localises to the cytoplasm. The catalysed reaction is tRNA(Glu) + L-glutamate + ATP = L-glutamyl-tRNA(Glu) + AMP + diphosphate. Its function is as follows. Catalyzes the attachment of glutamate to tRNA(Glu) in a two-step reaction: glutamate is first activated by ATP to form Glu-AMP and then transferred to the acceptor end of tRNA(Glu). The sequence is that of Glutamate--tRNA ligase 1 from Cereibacter sphaeroides (strain ATCC 17029 / ATH 2.4.9) (Rhodobacter sphaeroides).